The sequence spans 538 residues: Beta-1,4-mannosyl-glycoprotein 4-beta-N-acetylglucosaminyltransferase (538 aa).

The Cytoplasmic segment spans residues methionine 1–lysine 7. Residues leucine 8–leucine 23 form a helical; Signal-anchor for type II membrane protein membrane-spanning segment. Over histidine 24–glycine 538 the chain is Lumenal. The segment at glycine 121–arginine 151 is disordered. Residues asparagine 245, asparagine 263, and asparagine 401 are each glycosylated (N-linked (GlcNAc...) asparagine). The interval proline 509–glycine 538 is disordered.

Belongs to the glycosyltransferase 17 family. As to quaternary structure, interacts with MGAT4D.

The protein localises to the golgi apparatus membrane. It carries out the reaction N(4)-{beta-D-GlcNAc-(1-&gt;2)-alpha-D-Man-(1-&gt;3)-[beta-D-GlcNAc-(1-&gt;2)-alpha-D-Man-(1-&gt;6)]-beta-D-Man-(1-&gt;4)-beta-D-GlcNAc-(1-&gt;4)-beta-D-GlcNAc}-L-asparaginyl-[protein] + UDP-N-acetyl-alpha-D-glucosamine = N(4)-{beta-D-GlcNAc-(1-&gt;2)-alpha-D-Man-(1-&gt;3)-[beta-D-GlcNAc-(1-&gt;4)]-[beta-D-GlcNAc-(1-&gt;2)-alpha-D-Man-(1-&gt;6)]-beta-D-Man-(1-&gt;4)-beta-D-GlcNAc-(1-&gt;4)-beta-D-GlcNAc}-L-asparaginyl-[protein] + UDP + H(+). It participates in protein modification; protein glycosylation. Functionally, it is involved in the regulation of the biosynthesis and biological function of glycoprotein oligosaccharides. Catalyzes the addition of N-acetylglucosamine in beta 1-4 linkage to the beta-linked mannose of the trimannosyl core of N-linked sugar chains, called bisecting N-acetylglucosamine (GlcNAc). It is one of the most important enzymes involved in the regulation of the biosynthesis of glycoprotein oligosaccharides. The addition of this bisecting GlcNAc residue alters not only the composition, but also the conformation of the N-glycan. The introduction of the bisecting GlcNAc residue results in the suppression of further processing and elongation of N-glycans, precluding the formation of beta-1,6 GlcNAc branching, catalyzed by MGAT5 since it is unable to use the bisected oligosaccharide as a substrate. Addition of bisecting N-acetylglucosamine to CDH1/E-cadherin modulates CDH1 cell membrane location. Inhibits NeuAc-alpha-2,3-Gal-beta-1,4-GlcNAc- formation which modulates sialylation levels and plays a role in cell migration regulation. In brain, addition of bisecting N-acetylglucosamine to BACE1 blocks its lysosomal targeting in response to oxidative stress and further degradation which increases its location to early endosome and the APP cleavage. This chain is Beta-1,4-mannosyl-glycoprotein 4-beta-N-acetylglucosaminyltransferase (Mgat3), found in Rattus norvegicus (Rat).